Here is a 246-residue protein sequence, read N- to C-terminus: Mast cell protease 2 (246 aa).

The signal sequence occupies residues 1 to 19; the sequence is MHRPPLPLVLLLLCCRAQA. The propeptide at 20-21 is activation peptide; that stretch reads GE. One can recognise a Peptidase S1 domain in the interval 22 to 244; that stretch reads IIGGTESKPH…YRPWIDEVLK (223 aa). A disulfide bridge links Cys51 with Cys67. Catalysis depends on charge relay system residues His66 and Asp109. N-linked (GlcNAc...) asparagine glycosylation is present at Asn120. Cystine bridges form between Cys143–Cys208 and Cys174–Cys187. Catalysis depends on Ser202, which acts as the Charge relay system.

The protein belongs to the peptidase S1 family. Granzyme subfamily.

Its subcellular location is the secreted. It localises to the cytoplasmic granule. In terms of biological role, putative mast cell chymase. The protein is Mast cell protease 2 of Ovis aries (Sheep).